Reading from the N-terminus, the 230-residue chain is Maleylacetoacetate isomerase (230 aa).

A GST N-terminal domain is found at 7–95; it reads LRVTLYTYFR…YLDEAFPDNP (89 aa). Glutathione is bound by residues 17–22, Gln-46, Val-60, 79–80, Gln-123, and 127–129; these read SSCSAR, QS, and NLR. Residues 104 to 226 enclose the GST C-terminal domain; the sequence is NPQQRALVRS…HWRTQQDTPT (123 aa).

Belongs to the GST superfamily. Zeta family. It depends on glutathione as a cofactor.

The protein resides in the cytoplasm. The catalysed reaction is 4-maleylacetoacetate = 4-fumarylacetoacetate. It functions in the pathway amino-acid degradation; L-phenylalanine degradation; acetoacetate and fumarate from L-phenylalanine: step 5/6. This chain is Maleylacetoacetate isomerase (maiA), found in Emericella nidulans (strain FGSC A4 / ATCC 38163 / CBS 112.46 / NRRL 194 / M139) (Aspergillus nidulans).